A 477-amino-acid chain; its full sequence is 3-isopropylmalate dehydratase large subunit (477 aa).

[4Fe-4S] cluster-binding residues include Cys351, Cys411, and Cys414.

This sequence belongs to the aconitase/IPM isomerase family. LeuC type 1 subfamily. In terms of assembly, heterodimer of LeuC and LeuD. It depends on [4Fe-4S] cluster as a cofactor.

The enzyme catalyses (2R,3S)-3-isopropylmalate = (2S)-2-isopropylmalate. Its pathway is amino-acid biosynthesis; L-leucine biosynthesis; L-leucine from 3-methyl-2-oxobutanoate: step 2/4. Its function is as follows. Catalyzes the isomerization between 2-isopropylmalate and 3-isopropylmalate, via the formation of 2-isopropylmaleate. The sequence is that of 3-isopropylmalate dehydratase large subunit from Kineococcus radiotolerans (strain ATCC BAA-149 / DSM 14245 / SRS30216).